A 141-amino-acid polypeptide reads, in one-letter code: Hemoglobin subunit alpha-1 (141 aa).

Positions 1 to 141 constitute a Globin domain; sequence VLTEDDKNHI…VAKTLVAHYR (141 aa). Histidine 58 contributes to the O2 binding site. Histidine 87 lines the heme b pocket.

It belongs to the globin family. As to quaternary structure, heterotetramer of two alpha chains and two beta chains. As to expression, red blood cells.

In terms of biological role, involved in oxygen transport from the lung to the various peripheral tissues. The sequence is that of Hemoglobin subunit alpha-1 from Iguana iguana (Common iguana).